The chain runs to 324 residues: 33 kDa ribonucleoprotein, chloroplastic (324 aa).

A chloroplast-targeting transit peptide spans 1 to 71 (MSGCCFSFAA…YRSSIFLSTC (71 aa)). 2 RRM domains span residues 114 to 192 (GRLY…FPEV) and 217 to 296 (HKLY…AGQK). The tract at residues 294–324 (GQKAPVSSPPVVETSPENDSDNSELLSSLSS) is disordered. A compositionally biased stretch (low complexity) spans 298–308 (PVSSPPVVETS).

It is found in the plastid. The protein localises to the chloroplast. In terms of biological role, could be involved in splicing and/or processing of chloroplast RNA's. In Nicotiana sylvestris (Wood tobacco), this protein is 33 kDa ribonucleoprotein, chloroplastic.